A 109-amino-acid polypeptide reads, in one-letter code: Fluoride-specific ion channel FluC 1 (109 aa).

4 helical membrane-spanning segments follow: residues 1 to 21 (MVIV…YFFS), 29 to 49 (LPLG…VFYN), 55 to 75 (EVYA…STLN), and 87 to 107 (VFYS…FLGI). Residues G66 and T69 each contribute to the Na(+) site.

The protein belongs to the fluoride channel Fluc/FEX (TC 1.A.43) family.

It localises to the cell membrane. The enzyme catalyses fluoride(in) = fluoride(out). Na(+) is not transported, but it plays an essential structural role and its presence is essential for fluoride channel function. In terms of biological role, fluoride-specific ion channel. Important for reducing fluoride concentration in the cell, thus reducing its toxicity. In Streptococcus pneumoniae (strain ATCC BAA-255 / R6), this protein is Fluoride-specific ion channel FluC 1.